The primary structure comprises 513 residues: ATP synthase subunit alpha (513 aa).

169–176 (GDRQTGKT) is an ATP binding site.

The protein belongs to the ATPase alpha/beta chains family. F-type ATPases have 2 components, CF(1) - the catalytic core - and CF(0) - the membrane proton channel. CF(1) has five subunits: alpha(3), beta(3), gamma(1), delta(1), epsilon(1). CF(0) has three main subunits: a(1), b(2) and c(9-12). The alpha and beta chains form an alternating ring which encloses part of the gamma chain. CF(1) is attached to CF(0) by a central stalk formed by the gamma and epsilon chains, while a peripheral stalk is formed by the delta and b chains.

It is found in the cell inner membrane. The enzyme catalyses ATP + H2O + 4 H(+)(in) = ADP + phosphate + 5 H(+)(out). In terms of biological role, produces ATP from ADP in the presence of a proton gradient across the membrane. The alpha chain is a regulatory subunit. This is ATP synthase subunit alpha from Shewanella amazonensis (strain ATCC BAA-1098 / SB2B).